Consider the following 691-residue polypeptide: MKKNIINTWYSFVNIPNVIVPDIEKEIRRMENGARSSFSDDDGDDDSASMFEESENETPHARDSCRNNSQRRDPSQREQYLPGAIALFNVNNSSNKEQEPKEKKKKKKEKKSKSGDKNENKKDSEKKKKKEKEKEKKNKEEKGKDKKEEEKKEVMVIDPAGNMYYNWLFCITLPVMYNWTMVIARACFDELQSDYLEYWIIFDYLSDIVYLLDMFVRTRTGYLEQGLLVREEAKLIEKYKSNLQFKLDFLSVIPTDLLYFKLGWNYPEIRLNRLLRISRMFEFFQRTETRTNYPNIFRISNLVMYIVIIIHWNACVYFSISKAIGFGNDTWVYPDVNDPEFGRLARKYVYSLYWSTLTLTTIGETPPPVRDSEYVFVVVDFLIGVLIFATIVGNIGSMISNMNAARAEFQARIDAIKQYMHFRNVSKDMEKRVIKWFDYLWTNKKTVDEKEVLKYLPDKLRAEIAINVHLDTLKKVRIFADCEAGLLVELVLKLQPQVYSPGDYICKKGDIGREMYIIKEGKLAVVADDGITQFVVLSDGSYFGEISILNIKGSKAGNRRTANIKSIGYSDLFCLSKDDLMEALTEYPDAKTMLEEKGKQILMKDGLLDINIANAGSDPKDLEEKVTRMEGSVDLLQTRFARILAEYESMQQKLKQRLTKVERFLKPIIDTEFSALEGTGDESRPLDSTQD.

At 1-168 (MKKNIINTWY…PAGNMYYNWL (168 aa)) the chain is on the cytoplasmic side. The segment at 31–151 (ENGARSSFSD…KGKDKKEEEK (121 aa)) is disordered. Over residues 39–56 (SDDDGDDDSASMFEESEN) the composition is skewed to acidic residues. Composition is skewed to basic and acidic residues over residues 57-76 (ETPHARDSCRNNSQRRDPSQ) and 112-151 (SKSGDKNENKKDSEKKKKKEKEKEKKNKEEKGKDKKEEEK). The chain crosses the membrane as a helical span at residues 169–190 (FCITLPVMYNWTMVIARACFDE). At 191–200 (LQSDYLEYWI) the chain is on the extracellular side. Residues 201–221 (IFDYLSDIVYLLDMFVRTRTG) form a helical membrane-spanning segment. The Cytoplasmic portion of the chain corresponds to 222–246 (YLEQGLLVREEAKLIEKYKSNLQFK). The chain crosses the membrane as a helical span at residues 247-265 (LDFLSVIPTDLLYFKLGWN). Residues 266 to 270 (YPEIR) are Extracellular-facing. Residues 271–289 (LNRLLRISRMFEFFQRTET) form a helical membrane-spanning segment. Residues 290 to 296 (RTNYPNI) lie on the Cytoplasmic side of the membrane. An ion conduction pathway region spans residues 294–402 (PNIFRISNLV…GNIGSMISNM (109 aa)). A helical membrane pass occupies residues 297-320 (FRISNLVMYIVIIIHWNACVYFSI). At 321-343 (SKAIGFGNDTWVYPDVNDPEFGR) the chain is on the extracellular side. N-linked (GlcNAc...) asparagine glycosylation occurs at Asn328. 2 consecutive transmembrane segments (helical) span residues 344 to 378 (LARKYVYSLYWSTLTLTTIGETPPPVRDSEYVFVV) and 379 to 403 (VDFLIGVLIFATIVGNIGSMISNMN). The tract at residues 361–364 (TIGE) is selectivity filter. The tract at residues 404–480 (AARAEFQARI…DTLKKVRIFA (77 aa)) is C-linker. The Cytoplasmic portion of the chain corresponds to 404–691 (AARAEFQARI…ESRPLDSTQD (288 aa)). The tract at residues 484–604 (AGLLVELVLK…EEKGKQILMK (121 aa)) is cyclic nucleotide-binding domain. 3',5'-cyclic GMP-binding residues include Gly544, Ser547, Arg560, and Thr561. Positions 560 and 561 each coordinate 3',5'-cyclic AMP. A coiled-coil region spans residues 622–676 (LEEKVTRMEGSVDLLQTRFARILAEYESMQQKLKQRLTKVERFLKPIIDTEFSAL).

The protein belongs to the cyclic nucleotide-gated cation channel (TC 1.A.1.5) family. CNGA1 subfamily. As to quaternary structure, forms heterotetrameric channels composed of CNGA1 and CNGB1 subunits with 3:1 stoichiometry. May also form cyclic nucleotide-activated homotetrameric channels, that are efficiently activated by saturating cGMP, but poorly activated by saturating cAMP compared to the heterotetramer with CNGB1. The channel binds Ca(2+)-bound CALM1 via CaM1 and CaM2 regions of the CNGB1 subunit; this interaction modulates the affinity of the channel for cNMPs in response to intracellular Ca(2+) levels.

The protein localises to the cell membrane. The catalysed reaction is Ca(2+)(in) = Ca(2+)(out). The enzyme catalyses Na(+)(in) = Na(+)(out). It catalyses the reaction K(+)(in) = K(+)(out). It carries out the reaction NH4(+)(in) = NH4(+)(out). The catalysed reaction is Rb(+)(in) = Rb(+)(out). The enzyme catalyses Li(+)(in) = Li(+)(out). It catalyses the reaction Cs(+)(in) = Cs(+)(out). Functionally, pore-forming subunit of the rod cyclic nucleotide-gated channel. Mediates rod photoresponses at dim light converting transient changes in intracellular cGMP levels into electrical signals. In the dark, cGMP levels are high and keep the channel open enabling a steady inward current carried by Na(+) and Ca(2+) ions that leads to membrane depolarization and neurotransmitter release from synaptic terminals. Upon photon absorption cGMP levels decline leading to channel closure and membrane hyperpolarization that ultimately slows neurotransmitter release and signals the presence of light, the end point of the phototransduction cascade. Conducts cGMP- and cAMP-gated ion currents, with permeability for monovalent and divalent cations. The selectivity for Ca(2+) over Na(+) increases with cGMP concentrations, whereas the selectivity among monovalent ions is independent of the cGMP levels. The polypeptide is Cyclic nucleotide-gated channel alpha-1 (Canis lupus familiaris (Dog)).